The primary structure comprises 255 residues: Type III pantothenate kinase (255 aa).

ATP is bound at residue 6–13 (DIGNTTSE). Residues Tyr100 and 107–110 (GIDR) each bind substrate. The active-site Proton acceptor is Asp109. Asp129 serves as a coordination point for K(+). Thr132 is an ATP binding site. Residue Thr184 participates in substrate binding.

It belongs to the type III pantothenate kinase family. As to quaternary structure, homodimer. Requires NH4(+) as cofactor. K(+) serves as cofactor.

It localises to the cytoplasm. The enzyme catalyses (R)-pantothenate + ATP = (R)-4'-phosphopantothenate + ADP + H(+). It participates in cofactor biosynthesis; coenzyme A biosynthesis; CoA from (R)-pantothenate: step 1/5. Its function is as follows. Catalyzes the phosphorylation of pantothenate (Pan), the first step in CoA biosynthesis. The sequence is that of Type III pantothenate kinase from Persephonella marina (strain DSM 14350 / EX-H1).